A 596-amino-acid polypeptide reads, in one-letter code: Actin-related protein 9 (596 aa).

Positions 148-178 (LASPAETSPDKGDASASEAVPDVTDSKDTSE) are disordered.

This sequence belongs to the actin family. ARP8 subfamily.

In Arabidopsis thaliana (Mouse-ear cress), this protein is Actin-related protein 9 (ARP9).